We begin with the raw amino-acid sequence, 378 residues long: Cobalt-precorrin-5B C(1)-methyltransferase (378 aa).

This sequence belongs to the CbiD family.

It carries out the reaction Co-precorrin-5B + S-adenosyl-L-methionine = Co-precorrin-6A + S-adenosyl-L-homocysteine. Its pathway is cofactor biosynthesis; adenosylcobalamin biosynthesis; cob(II)yrinate a,c-diamide from sirohydrochlorin (anaerobic route): step 6/10. Functionally, catalyzes the methylation of C-1 in cobalt-precorrin-5B to form cobalt-precorrin-6A. In Tolumonas auensis (strain DSM 9187 / NBRC 110442 / TA 4), this protein is Cobalt-precorrin-5B C(1)-methyltransferase.